Reading from the N-terminus, the 1372-residue chain is DNA-directed RNA polymerase subunit beta (1372 aa).

Belongs to the RNA polymerase beta chain family. In terms of assembly, the RNAP catalytic core consists of 2 alpha, 1 beta, 1 beta' and 1 omega subunit. When a sigma factor is associated with the core the holoenzyme is formed, which can initiate transcription.

It carries out the reaction RNA(n) + a ribonucleoside 5'-triphosphate = RNA(n+1) + diphosphate. In terms of biological role, DNA-dependent RNA polymerase catalyzes the transcription of DNA into RNA using the four ribonucleoside triphosphates as substrates. This Nitratidesulfovibrio vulgaris (strain DP4) (Desulfovibrio vulgaris) protein is DNA-directed RNA polymerase subunit beta.